The sequence spans 757 residues: UDP-N-acetylmuramoyl-L-alanyl-D-glutamate--2,6-diaminopimelate ligase MurE homolog, chloroplastic (757 aa).

Residues Met-1–Pro-11 are compositionally biased toward low complexity. A chloroplast-targeting transit peptide spans Met-1–Glu-53. 3 disordered regions span residues Met-1–Phe-112, Phe-126–Leu-152, and Val-172–Gly-195. Residues Phe-12 to Arg-30 are compositionally biased toward pro residues. Acidic residues-rich tracts occupy residues Ala-47–Glu-56 and Pro-142–Leu-152.

The protein belongs to the MurCDEF family. MurE subfamily. Component of the plastid-encoded plastid RNA polymerase (PEP) complex.

The protein localises to the plastid. The protein resides in the chloroplast. Its function is as follows. Required for the activity of the plastid-encoded RNA polymerase (PEP) and full expression of genes transcribed by PEP. This chain is UDP-N-acetylmuramoyl-L-alanyl-D-glutamate--2,6-diaminopimelate ligase MurE homolog, chloroplastic, found in Oryza sativa subsp. japonica (Rice).